A 112-amino-acid chain; its full sequence is Ig kappa chain V-III region PC 7132 (112 aa).

Positions Asp-1–Cys-23 are framework-1. Residues Cys-23 and Cys-92 are joined by a disulfide bond. The interval Arg-24–Asn-38 is complementarity-determining-1. The segment at Trp-39–Tyr-53 is framework-2. Residues Ala-54–Ser-60 are complementarity-determining-2. The segment at Gly-61–Cys-92 is framework-3. The tract at residues Gln-93–Thr-102 is complementarity-determining-3. Positions Phe-103–Lys-112 are framework-4.

In Mus musculus (Mouse), this protein is Ig kappa chain V-III region PC 7132.